A 118-amino-acid polypeptide reads, in one-letter code: V-type proton ATPase subunit G 2 (118 aa).

Positions Arg26–Arg90 are disordered. Residues Gln35–Phe55 are compositionally biased toward basic and acidic residues. 2 stretches are compositionally biased toward polar residues: residues Gln56–Leu69 and Arg78–Gln89.

Belongs to the V-ATPase G subunit family. In terms of assembly, V-ATPase is a heteromultimeric enzyme made up of two complexes: the ATP-hydrolytic V1 complex and the proton translocation V0 complex. The V1 complex consists of three catalytic AB heterodimers that form a heterohexamer, three peripheral stalks each consisting of EG heterodimers, one central rotor including subunits D and F, and the regulatory subunits C and H. The proton translocation complex V0 consists of the proton transport subunit a, a ring of proteolipid subunits c9c'', rotary subunit d, subunits e and f, and the accessory subunits ATP6AP1/Ac45 and ATP6AP2/PRR.

Its subcellular location is the melanosome. The protein resides in the cytoplasmic vesicle. It is found in the clathrin-coated vesicle membrane. Functionally, subunit of the V1 complex of vacuolar(H+)-ATPase (V-ATPase), a multisubunit enzyme composed of a peripheral complex (V1) that hydrolyzes ATP and a membrane integral complex (V0) that translocates protons. V-ATPase is responsible for acidifying and maintaining the pH of intracellular compartments and in some cell types, is targeted to the plasma membrane, where it is responsible for acidifying the extracellular environment. This is V-type proton ATPase subunit G 2 (ATP6V1G2) from Sus scrofa (Pig).